A 109-amino-acid chain; its full sequence is Nucleoid-associated protein PM0205 (109 aa).

It belongs to the YbaB/EbfC family. In terms of assembly, homodimer.

The protein localises to the cytoplasm. The protein resides in the nucleoid. In terms of biological role, binds to DNA and alters its conformation. May be involved in regulation of gene expression, nucleoid organization and DNA protection. The polypeptide is Nucleoid-associated protein PM0205 (Pasteurella multocida (strain Pm70)).